The sequence spans 290 residues: ATP synthase gamma chain (290 aa).

This sequence belongs to the ATPase gamma chain family. In terms of assembly, F-type ATPases have 2 components, CF(1) - the catalytic core - and CF(0) - the membrane proton channel. CF(1) has five subunits: alpha(3), beta(3), gamma(1), delta(1), epsilon(1). CF(0) has three main subunits: a, b and c.

It localises to the cell inner membrane. Functionally, produces ATP from ADP in the presence of a proton gradient across the membrane. The gamma chain is believed to be important in regulating ATPase activity and the flow of protons through the CF(0) complex. The chain is ATP synthase gamma chain from Dictyoglomus thermophilum (strain ATCC 35947 / DSM 3960 / H-6-12).